Here is a 100-residue protein sequence, read N- to C-terminus: Small ribosomal subunit protein bS21 (100 aa).

Basic and acidic residues predominate over residues 37–52 (EKPSEKKAREKAEAVR). The disordered stretch occupies residues 37–100 (EKPSEKKARE…GAGAGPRGPR (64 aa)). Positions 53–62 (RARKLARKKL) are enriched in basic residues. The span at 84–100 (GAAGAGAGAGAGPRGPR) shows a compositional bias: gly residues.

The protein belongs to the bacterial ribosomal protein bS21 family.

This chain is Small ribosomal subunit protein bS21, found in Rhodopseudomonas palustris (strain BisB5).